Reading from the N-terminus, the 159-residue chain is uncharacterized protein (159 aa).

The segment covering 1-13 (MTQPTRPSVTCDQ) has biased composition (polar residues). The segment at 1–57 (MTQPTRPSVTCDQGSSTIGGTAAQATTSSSATSGSNYQRDRLGRRPEIGVGGQPQIC) is disordered. A compositionally biased stretch (low complexity) spans 14-35 (GSSTIGGTAAQATTSSSATSGS). The span at 38 to 47 (QRDRLGRRPE) shows a compositional bias: basic and acidic residues.

This is an uncharacterized protein from Homo sapiens (Human).